The following is a 502-amino-acid chain: Probable cytochrome P450 6a23 (502 aa).

C445 is a binding site for heme.

The protein belongs to the cytochrome P450 family. Requires heme as cofactor.

It localises to the endoplasmic reticulum membrane. It is found in the microsome membrane. May be involved in the metabolism of insect hormones and in the breakdown of synthetic insecticides. In Drosophila melanogaster (Fruit fly), this protein is Probable cytochrome P450 6a23 (Cyp6a23).